The sequence spans 182 residues: Ribosome-recycling factor (182 aa).

This sequence belongs to the RRF family.

The protein localises to the cytoplasm. Functionally, responsible for the release of ribosomes from messenger RNA at the termination of protein biosynthesis. May increase the efficiency of translation by recycling ribosomes from one round of translation to another. The polypeptide is Ribosome-recycling factor (Synechococcus sp. (strain CC9605)).